A 598-amino-acid polypeptide reads, in one-letter code: Pescadillo homolog (598 aa).

A disordered region spans residues glutamine 296–valine 317. Residues proline 345–proline 439 form the BRCT domain. Disordered regions lie at residues aspartate 452–glutamate 501, glycine 515–glutamate 544, and methionine 564–lysine 598. Over residues glutamate 463–aspartate 485 the composition is skewed to acidic residues. 3 stretches are compositionally biased toward basic and acidic residues: residues lysine 520–serine 532, glutamine 570–lysine 579, and alanine 586–lysine 598. Residues glutamine 557–lysine 598 adopt a coiled-coil conformation.

It belongs to the pescadillo family. As to quaternary structure, component of the NOP7 complex, composed of ERB1, NOP7 and YTM1. The complex is held together by ERB1, which interacts with NOP7 via its N-terminal domain and with YTM1 via a high-affinity interaction between the seven-bladed beta-propeller domains of the 2 proteins. The NOP7 complex associates with the 66S pre-ribosome.

Its subcellular location is the nucleus. It is found in the nucleolus. The protein localises to the nucleoplasm. Component of the NOP7 complex, which is required for maturation of the 25S and 5.8S ribosomal RNAs and formation of the 60S ribosome. The protein is Pescadillo homolog of Candida glabrata (strain ATCC 2001 / BCRC 20586 / JCM 3761 / NBRC 0622 / NRRL Y-65 / CBS 138) (Yeast).